A 460-amino-acid chain; its full sequence is ATP synthase subunit beta (460 aa).

150 to 157 contacts ATP; sequence GGAGVGKT.

The protein belongs to the ATPase alpha/beta chains family. As to quaternary structure, F-type ATPases have 2 components, CF(1) - the catalytic core - and CF(0) - the membrane proton channel. CF(1) has five subunits: alpha(3), beta(3), gamma(1), delta(1), epsilon(1). CF(0) has three main subunits: a(1), b(2) and c(9-12). The alpha and beta chains form an alternating ring which encloses part of the gamma chain. CF(1) is attached to CF(0) by a central stalk formed by the gamma and epsilon chains, while a peripheral stalk is formed by the delta and b chains.

Its subcellular location is the cell inner membrane. It carries out the reaction ATP + H2O + 4 H(+)(in) = ADP + phosphate + 5 H(+)(out). In terms of biological role, produces ATP from ADP in the presence of a proton gradient across the membrane. The catalytic sites are hosted primarily by the beta subunits. The chain is ATP synthase subunit beta from Proteus mirabilis (strain HI4320).